Reading from the N-terminus, the 340-residue chain is Annexin A2-A (340 aa).

The P10 binding site stretch occupies residues 2 to 25; it reads ALIHEILGKLSLEGNQSCARQSAL. Annexin repeat units follow at residues 34 to 105, 106 to 177, 190 to 262, and 266 to 337; these read FDAE…GLIK, TRPQ…ALAK, EKID…NLVQ, and NKPL…NLCG.

This sequence belongs to the annexin family. Tetramer of 2 light chains (p10 proteins) and 2 heavy chains (p36 proteins).

It localises to the secreted. The protein resides in the extracellular space. It is found in the extracellular matrix. The protein localises to the basement membrane. Calcium-regulated membrane-binding protein whose affinity for calcium is greatly enhanced by anionic phospholipids. It binds two calcium ions with high affinity. The chain is Annexin A2-A (anxa2-a) from Xenopus laevis (African clawed frog).